Reading from the N-terminus, the 341-residue chain is Guanine nucleotide-binding protein subunit beta (341 aa).

WD repeat units follow at residues 54-84, 96-126, 142-171, 183-213, 225-255, 269-299, and 311-341; these read GHLA…IVWD, LRSS…SIYS, GHTG…ALWN, GHTG…KLFD, GHES…RLFD, NIIC…NVWD, and GHDN…KIWN.

The protein belongs to the WD repeat G protein beta family. In terms of assembly, g proteins are composed of 3 units, alpha, beta and gamma.

Its function is as follows. Guanine nucleotide-binding proteins (G proteins) are involved as a modulator or transducer in various transmembrane signaling systems. The beta and gamma chains are required for the GTPase activity, for replacement of GDP by GTP, and for G protein-effector interaction. The sequence is that of Guanine nucleotide-binding protein subunit beta from Loligo forbesii (Veined squid).